The following is a 78-amino-acid chain: Defensin-like protein 149 (78 aa).

The N-terminal stretch at 1-25 is a signal peptide; it reads MMKKLIQLSFTVMIIFTILVLGVVA. 4 disulfide bridges follow: cysteine 36-cysteine 77, cysteine 45-cysteine 65, cysteine 50-cysteine 71, and cysteine 54-cysteine 73.

Belongs to the DEFL family.

Its subcellular location is the secreted. This is Defensin-like protein 149 (LCR5) from Arabidopsis thaliana (Mouse-ear cress).